We begin with the raw amino-acid sequence, 777 residues long: Rho guanine nucleotide exchange factor 38 (777 aa).

T34 bears the Phosphothreonine mark. A disordered region spans residues 35-72; the sequence is DTVVESSVSGDHSGTLRRSQSDRTEYNQKLQEKMTPQG. Positions 37-52 are enriched in polar residues; the sequence is VVESSVSGDHSGTLRR. The segment covering 53-66 has biased composition (basic and acidic residues); the sequence is SQSDRTEYNQKLQE. In terms of domain architecture, DH spans 94–285; that stretch reads KREKIIKELI…KDINVNINEL (192 aa). A BAR domain is found at 327–536; it reads LKILTRGESQ…QNQVLEEIQN (210 aa). Residues 582–645 enclose the SH3 1 domain; sequence SAEELYQAKR…YSSFLKPYNP (64 aa). The interval 673-694 is disordered; sequence PASDSVTGTSESSIGDSSSSLS. Over residues 679-694 the composition is skewed to low complexity; that stretch reads TGTSESSIGDSSSSLS. An SH3 2 domain is found at 713 to 776; it reads VDEQIFYAVH…PANYLGKMTY (64 aa).

Functionally, may act as a guanine-nucleotide releasing factor. The polypeptide is Rho guanine nucleotide exchange factor 38 (ARHGEF38) (Homo sapiens (Human)).